Reading from the N-terminus, the 454-residue chain is Adenylosuccinate synthetase isozyme 1 B (454 aa).

The disordered stretch occupies residues 1–24 (MSGTRASNDRSSHPGAGGHKRPRY). Residues 39-45 (GDEGKGK) and 67-69 (GHT) each bind GTP. Asp40 acts as the Proton acceptor in catalysis. 2 residues coordinate Mg(2+): Asp40 and Gly67. Asp40 lines the substrate pocket. IMP-binding positions include 40-43 (DEGK), 65-68 (NAGH), Thr160, Arg174, Asn253, Thr268, and Arg332. Residue His68 is the Proton donor of the active site. 328–334 (VTTGRKR) serves as a coordination point for substrate. Residues Arg334, 360–362 (KLD), and 442–445 (GVGK) each bind GTP.

Belongs to the adenylosuccinate synthetase family. Homodimer. Mg(2+) serves as cofactor.

The protein localises to the cytoplasm. The catalysed reaction is IMP + L-aspartate + GTP = N(6)-(1,2-dicarboxyethyl)-AMP + GDP + phosphate + 2 H(+). Its pathway is purine metabolism; AMP biosynthesis via de novo pathway; AMP from IMP: step 1/2. Component of the purine nucleotide cycle (PNC), which interconverts IMP and AMP to regulate the nucleotide levels in various tissues, and which contributes to glycolysis and ammoniagenesis. Catalyzes the first committed step in the biosynthesis of AMP from IMP. The sequence is that of Adenylosuccinate synthetase isozyme 1 B (adss1-b) from Xenopus laevis (African clawed frog).